Reading from the N-terminus, the 542-residue chain is Zinc finger CCHC domain-containing protein 7 (542 aa).

Residues 110-144 (QAQEKTQSPATPRSNKVANKCKRSNKKPEPEESPS) are disordered. Positions 112–126 (QEKTQSPATPRSNKV) are enriched in polar residues. Glycyl lysine isopeptide (Lys-Gly) (interchain with G-Cter in SUMO2) cross-links involve residues K129 and K136. S142 bears the Phosphoserine mark. Residues K236 and K251 each participate in a glycyl lysine isopeptide (Lys-Gly) (interchain with G-Cter in SUMO2) cross-link. CCHC-type zinc fingers lie at residues 238-255 (VTCR…NCPL), 260-277 (RPCC…GCPA), and 301-318 (KRCD…ACPE). K336 participates in a covalent cross-link: Glycyl lysine isopeptide (Lys-Gly) (interchain with G-Cter in SUMO2). The CCHC-type 4 zinc finger occupies 345–362 (VYCYNCAQKGHYGHECTE). A disordered region spans residues 396-542 (LKDIKKNGDF…RKKKPKSSGF (147 aa)). K410 is covalently cross-linked (Glycyl lysine isopeptide (Lys-Gly) (interchain with G-Cter in SUMO2)). The span at 412-421 (PHGEETDRYH) shows a compositional bias: basic and acidic residues. Over residues 422-435 (HDRRKSRFSGKRSR) the composition is skewed to basic residues. Residue K432 forms a Glycyl lysine isopeptide (Lys-Gly) (interchain with G-Cter in SUMO2) linkage. Positions 436–456 (WPRESKETQKEKTRGREGEKH) are enriched in basic and acidic residues. K474 is covalently cross-linked (Glycyl lysine isopeptide (Lys-Gly) (interchain with G-Cter in SUMO2)). Over residues 474 to 489 (KPNSSSSSNSQKPSKS) the composition is skewed to low complexity. Phosphoserine is present on residues S478 and S480. Residues K485 and K488 each participate in a glycyl lysine isopeptide (Lys-Gly) (interchain with G-Cter in SUMO2) cross-link. Composition is skewed to basic and acidic residues over residues 499–510 (LREEKLRRESMR) and 518–528 (FVEDGSHDDLF). K531 participates in a covalent cross-link: Glycyl lysine isopeptide (Lys-Gly) (interchain with G-Cter in SUMO2). The segment covering 531–542 (KQRKKKPKSSGF) has biased composition (basic residues).

Component of a nucleolar TRAMP-like complex, an ATP-dependent exosome regulatory complex consisting of a helicase (MTREX), an oligadenylate polymerase (TENT4B or TENT4A), and a substrate specific RNA-binding factor (ZCCHC7 or ZCCHC8). Several TRAMP-like complexes exist with specific compositions and are associated with nuclear, or nucleolar RNA exosomes.

It is found in the nucleus. It localises to the nucleolus. This is Zinc finger CCHC domain-containing protein 7 (Zcchc7) from Rattus norvegicus (Rat).